The chain runs to 1107 residues: Miniconductance mechanosensitive channel MscM (1107 aa).

The N-terminal stretch at 1 to 19 is a signal peptide; that stretch reads MRLIITFLMAWCLSWGAYA. A run of 11 helical transmembrane segments spans residues 467-487, 522-542, 551-571, 600-620, 628-648, 674-694, 698-718, 785-805, 828-848, 875-895, and 910-930; these read VMML…ILVG, LFWS…LGYG, LAVA…VVMI, YLMS…FDNL, SLGR…TLSL, MMIG…LATA, LARL…YHVI, ILML…HSAF, PITL…TQLV, TITK…MIGI, and GLGF…IILF.

It belongs to the MscS (TC 1.A.23) family. As to quaternary structure, homoheptamer.

The protein resides in the cell inner membrane. Its function is as follows. Mechanosensitive channel that protects cells against hypoosmotic stress when highly overexpressed. Gates spontaneously in response to increased membrane tension. The polypeptide is Miniconductance mechanosensitive channel MscM (mscM) (Escherichia coli (strain K12)).